The primary structure comprises 116 residues: Ferredoxin-like protein in nif region (116 aa).

Residues 2–29 (AYTITSQCISCKLCSSVCPTGAIKVAED) form the 4Fe-4S ferredoxin-type domain. Iron-sulfur cluster contacts are provided by C9, C12, C15, and C19.

This Trichormus azollae (Anabaena azollae) protein is Ferredoxin-like protein in nif region (fdxN).